Here is a 287-residue protein sequence, read N- to C-terminus: MSDQPMNEVQDNAAPANPWLELRRLTPARIALGRTGTSLPTCAQLDFQAAHAQARDAVHLAFDHAAISAQLAEKGRETILLHSAAADRDSYLQRPDLGRRLNDESAQTLRDYAAAHPGGLDLAVVVADGLSALAVHRHAVPFLTRLEEQASAEGWTLSPVLMVEQGRVAVADEIGELLGAKMVVILIGERPGLSSPDSLGLYFTYAPKVGLNDAHRNCISNVRLEGLSYAMAAHRLLYLMREACKRQISGVSLKDEAQLNTLESDDSAENSDRKIGNFLLDGPAVPH.

Residues V168, E189, and C218 each contribute to the adenosylcob(III)alamin site.

It belongs to the EutC family. The basic unit is a heterodimer which dimerizes to form tetramers. The heterotetramers trimerize; 6 large subunits form a core ring with 6 small subunits projecting outwards. Adenosylcob(III)alamin is required as a cofactor.

It localises to the bacterial microcompartment. It carries out the reaction ethanolamine = acetaldehyde + NH4(+). It functions in the pathway amine and polyamine degradation; ethanolamine degradation. In terms of biological role, catalyzes the deamination of various vicinal amino-alcohols to oxo compounds. Allows this organism to utilize ethanolamine as the sole source of nitrogen and carbon in the presence of external vitamin B12. The polypeptide is Ethanolamine ammonia-lyase small subunit (Pseudomonas syringae pv. tomato (strain ATCC BAA-871 / DC3000)).